A 283-amino-acid chain; its full sequence is Polyamine aminopropyltransferase (283 aa).

The PABS domain maps to 5 to 241 (NNWYIEHFER…GWWSVTLARK (237 aa)). Glutamine 35 contributes to the S-methyl-5'-thioadenosine binding site. The spermidine site is built by histidine 66 and aspartate 90. Residues aspartate 110 and 141-142 (DG) contribute to the S-methyl-5'-thioadenosine site. Aspartate 160 acts as the Proton acceptor in catalysis. Residue 160–163 (DSTD) coordinates spermidine. Proline 167 is an S-methyl-5'-thioadenosine binding site.

Belongs to the spermidine/spermine synthase family. In terms of assembly, homodimer or homotetramer.

Its subcellular location is the cytoplasm. It carries out the reaction S-adenosyl 3-(methylsulfanyl)propylamine + putrescine = S-methyl-5'-thioadenosine + spermidine + H(+). Its pathway is amine and polyamine biosynthesis; spermidine biosynthesis; spermidine from putrescine: step 1/1. Its function is as follows. Catalyzes the irreversible transfer of a propylamine group from the amino donor S-adenosylmethioninamine (decarboxy-AdoMet) to putrescine (1,4-diaminobutane) to yield spermidine. The chain is Polyamine aminopropyltransferase from Stenotrophomonas maltophilia (strain R551-3).